Here is a 132-residue protein sequence, read N- to C-terminus: T-cell receptor alpha chain V region 2B4 (132 aa).

The first 20 residues, 1–20, serve as a signal peptide directing secretion; sequence MKSLSVSLVVLWLLLNWVNS. The segment at 21–113 is v segment; sequence QQNVQQSPES…SALYLCAVTL (93 aa). Residue Asn-42 is glycosylated (N-linked (GlcNAc...) asparagine). Positions 114–117 are d segment; sequence YGGS. The j segment stretch occupies residues 118–132; that stretch reads GNKLIFGTGTLLSVK.

This is T-cell receptor alpha chain V region 2B4 from Mus musculus (Mouse).